The sequence spans 228 residues: Ribonuclease S-1 (228 aa).

Residues 1–27 (MGVTGMTYMFTMVFSLIVLILSSSTVG) form the signal peptide. RNA is bound at residue Q36. A disulfide bond links C42 and C49. Residue H60 coordinates RNA. Catalysis depends on H60, which acts as the Proton donor. A disulfide bridge connects residues C75 and C119. The N-linked (GlcNAc...) asparagine glycan is linked to N87. Residue 98–99 (NV) coordinates RNA. An N-linked (GlcNAc...) asparagine glycan is attached at N101. Residues F108, 111–112 (KE), and 115–116 (KH) each bind RNA. E112 is a catalytic residue. Catalysis depends on H116, which acts as the Proton acceptor. Residues N144, N157, and N175 are each glycosylated (N-linked (GlcNAc...) asparagine). 2 disulfide bridges follow: C183-C222 and C199-C210.

It belongs to the RNase T2 family. N-linked core structure at Asn-87 and Asn-101 contains xylose and fucose or consists of disaccharide (GlcNAc-GlcNAc). N-linked core structure at Asn-144 contains xylose.

It catalyses the reaction a ribonucleotidyl-ribonucleotide-RNA + H2O = a 3'-end 3'-phospho-ribonucleotide-RNA + a 5'-end dephospho-ribonucleoside-RNA + H(+). Functionally, self-incompatibility (SI) is the inherited ability of a flowering plant to prevent self-fertilization by discriminating between self and non-self pollen during pollination. In many species, self-incompatibility is controlled by the single, multiallelic locus S. The protein is Ribonuclease S-1 of Pyrus pyrifolia (Chinese pear).